Consider the following 418-residue polypeptide: Oxalate:formate antiporter (418 aa).

A run of 12 helical transmembrane segments spans residues 17-37, 48-68, 84-104, 108-128, 141-161, 172-192, 222-242, 250-270, 288-308, 311-331, 350-370, and 378-398; these read WFYLVLAVLLMCMISGVQYSW, LGVSLAAVQTAFTLSQVIQAG, IPLMFGGAMVLAGWTFMGMVD, ALYALYTLAGAGVGIVYGIAM, LASGFTAAGYGLGVLPFLPLI, AAFMYTGLIMGILIILIAFVI, FWVLWTAFFSVNFGGLLLVAN, LGLAAGVLTIGVSIQNLFNGG, MSVVFGINAVVLALFPTIAAL, VAFIAMLAIAFFTWGGSYALF, FFWAAKATASIFGGGLGAAIA, and AFLITAITSFIAFALATFVIP. An oxalate-binding site is contributed by Lys355.

The protein belongs to the major facilitator superfamily. OFA (TC 2.A.1.11) family. Monomer.

It localises to the cell inner membrane. Anion transporter that carries out the exchange of divalent oxalate with monovalent formate, the product of oxalate decarboxylation, at the plasma membrane, and in doing so catalyzes the vectorial portion of a proton-motive metabolic cycle that drives ATP synthesis. The protein is Oxalate:formate antiporter (oxlT) of Oxalobacter formigenes.